A 20-amino-acid chain; its full sequence is L-amino-acid oxidase L2 (20 aa).

The protein belongs to the flavin monoamine oxidase family. FIG1 subfamily. In terms of assembly, monomer. This is in contrast with most of its orthologs, that are non-covalently linked homodimers. It depends on FAD as a cofactor. N-glycosylated. Expressed by the venom gland.

It localises to the secreted. The catalysed reaction is an L-alpha-amino acid + O2 + H2O = a 2-oxocarboxylate + H2O2 + NH4(+). It catalyses the reaction L-leucine + O2 + H2O = 4-methyl-2-oxopentanoate + H2O2 + NH4(+). The enzyme catalyses L-phenylalanine + O2 + H2O = 3-phenylpyruvate + H2O2 + NH4(+). It carries out the reaction L-tryptophan + O2 + H2O = indole-3-pyruvate + H2O2 + NH4(+). The catalysed reaction is L-methionine + O2 + H2O = 4-methylsulfanyl-2-oxobutanoate + H2O2 + NH4(+). It catalyses the reaction L-isoleucine + O2 + H2O = (S)-3-methyl-2-oxopentanoate + H2O2 + NH4(+). The enzyme catalyses L-tyrosine + O2 + H2O = 3-(4-hydroxyphenyl)pyruvate + H2O2 + NH4(+). In terms of biological role, catalyzes an oxidative deamination of predominantly hydrophobic and aromatic L-amino acids, thus producing hydrogen peroxide that may contribute to the diverse toxic effects of this enzyme. Is active on L-Ile, L-Leu, L-Met, L-Phe, L-Trp, and L-Tyr. Exhibits diverse biological activities, such as hemorrhage, hemolysis, edema, apoptosis of vascular endothelial cells or tumor cell lines, antibacterial and antiparasitic activities, as well as regulation of platelet aggregation. Its effect on platelets is controversial, since it either induces aggregation or inhibits agonist-induced aggregation. These different effects are probably due to different experimental conditions. The polypeptide is L-amino-acid oxidase L2 (Daboia russelii (Russel's viper)).